Reading from the N-terminus, the 183-residue chain is Dual specificity protein phosphatase 22-B (183 aa).

In terms of domain architecture, Tyrosine-protein phosphatase spans 4–144 (GINKVLPDLY…LQEFQTGELQ (141 aa)). Residue cysteine 88 is the Phosphocysteine intermediate of the active site.

Belongs to the protein-tyrosine phosphatase family. Non-receptor class dual specificity subfamily.

Its subcellular location is the cytoplasm. The protein resides in the nucleus. The enzyme catalyses O-phospho-L-tyrosyl-[protein] + H2O = L-tyrosyl-[protein] + phosphate. It carries out the reaction O-phospho-L-seryl-[protein] + H2O = L-seryl-[protein] + phosphate. It catalyses the reaction O-phospho-L-threonyl-[protein] + H2O = L-threonyl-[protein] + phosphate. In terms of biological role, activates the Jnk signaling pathway. Dephosphorylates and deactivates p38 and stress-activated protein kinase/c-Jun N-terminal kinase (SAPK/JNK). The polypeptide is Dual specificity protein phosphatase 22-B (dusp22b) (Danio rerio (Zebrafish)).